The sequence spans 699 residues: Endogenous retrovirus group K member 8 Env polyprotein (699 aa).

Residues 1-47 are disordered; the sequence is MNPSEMQRKAPPRRRRHRNRAPLTHKMNKMVTSEEQMKLPSTKKAEP. A signal peptide spans 1 to 89; it reads MNPSEMQRKA…ALMIVSMVVS (89 aa). The span at 10–20 shows a compositional bias: basic residues; the sequence is APPRRRRHRNR. Residues 90 to 632 are Extracellular-facing; that stretch reads LPMPAGAAVA…NLNPVTWVKT (543 aa). 7 N-linked (GlcNAc...) asparagine glycosylation sites follow: asparagine 100, asparagine 128, asparagine 153, asparagine 274, asparagine 355, asparagine 372, and asparagine 461. The fusion peptide stretch occupies residues 466–486; it reads FIFTLIAVIMGLIAVTATAAV. N-linked (GlcNAc...) asparagine glycans are attached at residues asparagine 507, asparagine 554, asparagine 566, and asparagine 585. A helical transmembrane segment spans residues 633-653; sequence IGSTTIINLILILVCLFCLLL. Residues 654 to 699 lie on the Cytoplasmic side of the membrane; that stretch reads VCRCTQQLRRDSDHRERAMMTMAVLSKRKGGNVGKSKRDQIVTVSV.

Belongs to the beta type-B retroviral envelope protein family. HERV class-II K(HML-2) env subfamily. As to quaternary structure, the surface (SU) and transmembrane (TM) proteins form a heterodimer. SU and TM are attached by noncovalent interactions or by a labile interchain disulfide bond. Post-translationally, specific enzymatic cleavages in vivo yield the mature SU and TM proteins.

The protein localises to the cell membrane. It is found in the virion. Its function is as follows. Retroviral envelope proteins mediate receptor recognition and membrane fusion during early infection. Endogenous envelope proteins may have kept, lost or modified their original function during evolution. This endogenous envelope protein has lost its original fusogenic properties. In terms of biological role, SU mediates receptor recognition. Functionally, TM anchors the envelope heterodimer to the viral membrane through one transmembrane domain. The other hydrophobic domain, called fusion peptide, mediates fusion of the viral membrane with the target cell membrane. The polypeptide is Endogenous retrovirus group K member 8 Env polyprotein (ERVK-8) (Homo sapiens (Human)).